A 538-amino-acid polypeptide reads, in one-letter code: Interleukin-21 receptor (538 aa).

The signal sequence occupies residues 1–19; sequence MPRGWAAPLLLLLLQGGWG. Disulfide bonds link cysteine 20/cysteine 109, cysteine 25/cysteine 35, and cysteine 65/cysteine 81. The Extracellular portion of the chain corresponds to 20 to 232; it reads CPDLVCYTDY…FQTQSEELKE (213 aa). 2 Fibronectin type-III domains span residues 21 to 118 and 119 to 228; these read PDLV…AESI and KPAP…TQSE. Asparagine 73, asparagine 97, asparagine 104, asparagine 125, and asparagine 135 each carry an N-linked (GlcNAc...) asparagine glycan. Tryptophan 214 carries C-linked (Man) tryptophan glycosylation. A WSXWS motif motif is present at residues 214–218; the sequence is WSEWS. A helical membrane pass occupies residues 233 to 253; it reads GWNPHLLLLLLLVIVFIPAFW. The Cytoplasmic portion of the chain corresponds to 254 to 538; the sequence is SLKTHPLWRL…PLSSPGPQAS (285 aa). The Box 1 motif signature appears at 266-274; it reads KIWAVPSPE. 2 disordered regions span residues 342–367 and 457–487; these read ESDG…SEER and EDWA…GLDM.

The protein belongs to the type I cytokine receptor family. Type 4 subfamily. As to quaternary structure, heterodimer with the common gamma subunit. Associates with JAK1. Post-translationally, C-mannosylated at Trp-214 in the WSXWS motif, the sugar chain makes extensive hydrogen bonds with Asn-73 sugar, and bridges the two fibronectin domains transforming the V-shaped receptor into an A-frame. As to expression, selectively expressed in lymphoid tissues. Most highly expressed in thymus and spleen.

The protein localises to the membrane. Its function is as follows. This is a receptor for interleukin-21. In Homo sapiens (Human), this protein is Interleukin-21 receptor (IL21R).